The chain runs to 145 residues: MSTPFWQSKTLDQMTEAEWESLCDGCGKCCLHKLMDEDTDEIYYTNVACSWLNSDTCSCKDYPNRFSSGEECLKLTRDKIEEFNWLPDTCAYRLLGNGQTLPEWHPLLTGSKDAMHAADESVRGKIVYEVDVIDWEDHIVLMSRD.

Belongs to the UPF0260 family.

This chain is UPF0260 protein VC_1058, found in Vibrio cholerae serotype O1 (strain ATCC 39315 / El Tor Inaba N16961).